We begin with the raw amino-acid sequence, 556 residues long: Oxygen-dependent choline dehydrogenase (556 aa).

6-35 (DYIIIGAGSAGNVLAARLTEDPGVSVLLLE) contributes to the FAD binding site. Histidine 475 (proton acceptor) is an active-site residue.

This sequence belongs to the GMC oxidoreductase family. FAD serves as cofactor.

It carries out the reaction choline + A = betaine aldehyde + AH2. The catalysed reaction is betaine aldehyde + NAD(+) + H2O = glycine betaine + NADH + 2 H(+). The protein operates within amine and polyamine biosynthesis; betaine biosynthesis via choline pathway; betaine aldehyde from choline (cytochrome c reductase route): step 1/1. Functionally, involved in the biosynthesis of the osmoprotectant glycine betaine. Catalyzes the oxidation of choline to betaine aldehyde and betaine aldehyde to glycine betaine at the same rate. This is Oxygen-dependent choline dehydrogenase from Xanthomonas campestris pv. campestris (strain 8004).